Reading from the N-terminus, the 284-residue chain is Cell division protein DivIB (284 aa).

Positions 1–21 (MFGKRKDSKNKAMRDNEELTP) are disordered. Over 1-63 (MFGKRKDSKN…GLRKRRLQKR (63 aa)) the chain is Cytoplasmic. Residues 64–84 (VITLASIFGISAIISLYAILP) traverse the membrane as a helical segment. Residues 85 to 284 (VSRVSNIEIE…VGAYAYPYBK (200 aa)) lie on the Extracellular side of the membrane. A POTRA domain is found at 86-156 (SRVSNIEIEG…NVVKFKVTEY (71 aa)).

The protein belongs to the FtsQ/DivIB family. DivIB subfamily.

It is found in the cell membrane. Cell division protein that may be involved in stabilizing or promoting the assembly of the division complex. The sequence is that of Cell division protein DivIB from Ligilactobacillus salivarius (strain CECT 5713) (Lactobacillus salivarius).